The primary structure comprises 278 residues: Large ribosomal subunit protein uL2 (278 aa).

A disordered region spans residues 222 to 278 (GVVMNPVDHPHGGGEGRTSGGRHPVTPWGKPTKGAKTRKNKSTDKFIIRSRHERKKR). A compositionally biased stretch (basic residues) spans 269-278 (IRSRHERKKR).

The protein belongs to the universal ribosomal protein uL2 family. As to quaternary structure, part of the 50S ribosomal subunit. Forms a bridge to the 30S subunit in the 70S ribosome.

In terms of biological role, one of the primary rRNA binding proteins. Required for association of the 30S and 50S subunits to form the 70S ribosome, for tRNA binding and peptide bond formation. It has been suggested to have peptidyltransferase activity; this is somewhat controversial. Makes several contacts with the 16S rRNA in the 70S ribosome. The sequence is that of Large ribosomal subunit protein uL2 from Maricaulis maris (strain MCS10) (Caulobacter maris).